The following is a 119-amino-acid chain: Basic phospholipase A2 (119 aa).

7 cysteine pairs are disulfide-bonded: Cys11–Cys71, Cys27–Cys118, Cys29–Cys45, Cys44–Cys99, Cys51–Cys92, Cys60–Cys85, and Cys78–Cys90. Ca(2+)-binding residues include Tyr28, Gly30, and Gly32. His48 is an active-site residue. Asp49 lines the Ca(2+) pocket. Asp93 is a catalytic residue.

It belongs to the phospholipase A2 family. Group I subfamily. D49 sub-subfamily. Ca(2+) is required as a cofactor. Expressed by the venom gland.

It localises to the secreted. It carries out the reaction a 1,2-diacyl-sn-glycero-3-phosphocholine + H2O = a 1-acyl-sn-glycero-3-phosphocholine + a fatty acid + H(+). Its function is as follows. Snake venom phospholipase A2 (PLA2) that has several activities. It is myotoxic, has weak anticoagulant activity and inhibits neuromuscular transmission by blocking acetylcholine release from the nerve termini. PLA2 catalyzes the calcium-dependent hydrolysis of the 2-acyl groups in 3-sn-phosphoglycerides. The protein is Basic phospholipase A2 of Hydrophis schistosus (Beaked sea snake).